The following is a 360-amino-acid chain: Peptide chain release factor 1 (360 aa).

Glutamine 235 bears the N5-methylglutamine mark.

It belongs to the prokaryotic/mitochondrial release factor family. Post-translationally, methylated by PrmC. Methylation increases the termination efficiency of RF1.

Its subcellular location is the cytoplasm. Its function is as follows. Peptide chain release factor 1 directs the termination of translation in response to the peptide chain termination codons UAG and UAA. The chain is Peptide chain release factor 1 from Burkholderia mallei (strain NCTC 10247).